A 70-amino-acid polypeptide reads, in one-letter code: Large ribosomal subunit protein eL38 (70 aa).

Belongs to the eukaryotic ribosomal protein eL38 family.

The protein is Large ribosomal subunit protein eL38 (RpL38) of Drosophila melanogaster (Fruit fly).